A 200-amino-acid chain; its full sequence is uncharacterized protein (200 aa).

A signal peptide spans 1–24 (MSRVFSCVLRACVCAGLCCWVCMG). The segment at 124–200 (GGRDLPMHGA…GEGGDNGEGE (77 aa)) is disordered. Positions 184–200 (LGDEGETGEGGDNGEGE) are enriched in acidic residues.

This is an uncharacterized protein from Homo sapiens (Human).